The chain runs to 201 residues: Glycerol-3-phosphate acyltransferase (201 aa).

5 consecutive transmembrane segments (helical) span residues 10–30 (MLIG…GLIL), 60–80 (LAAA…LIAA), 86–106 (AAIA…WIGF), 116–136 (LGVL…AWIV), and 166–186 (ALAA…RANI).

This sequence belongs to the PlsY family. In terms of assembly, probably interacts with PlsX.

The protein resides in the cell inner membrane. The enzyme catalyses an acyl phosphate + sn-glycerol 3-phosphate = a 1-acyl-sn-glycero-3-phosphate + phosphate. Its pathway is lipid metabolism; phospholipid metabolism. Functionally, catalyzes the transfer of an acyl group from acyl-phosphate (acyl-PO(4)) to glycerol-3-phosphate (G3P) to form lysophosphatidic acid (LPA). This enzyme utilizes acyl-phosphate as fatty acyl donor, but not acyl-CoA or acyl-ACP. The polypeptide is Glycerol-3-phosphate acyltransferase (Brucella abortus (strain 2308)).